The chain runs to 374 residues: UPF0754 membrane protein SAR1937 (374 aa).

2 helical membrane-spanning segments follow: residues 4 to 24 and 354 to 374; these read LFII…TNVI and SLGF…AIFV.

It belongs to the UPF0754 family.

The protein localises to the cell membrane. The polypeptide is UPF0754 membrane protein SAR1937 (Staphylococcus aureus (strain MRSA252)).